We begin with the raw amino-acid sequence, 22 residues long: Large ribosomal subunit protein bL32 (22 aa).

Positions Cys-1 to Glu-22 are disordered. The span at Asp-13 to Glu-22 shows a compositional bias: low complexity.

This sequence belongs to the bacterial ribosomal protein bL32 family.

The polypeptide is Large ribosomal subunit protein bL32 (rpmF) (Ectopseudomonas mendocina (Pseudomonas mendocina)).